Consider the following 456-residue polypeptide: Adenylosuccinate synthetase isozyme 1 (456 aa).

The tract at residues 1 to 30 (MSSGWSQNDHRSYSNPPPVSGKRPRNDSGN) is disordered. Residues 41–47 (GDEGKGK) and 69–71 (GHT) each bind GTP. The active-site Proton acceptor is Asp42. Mg(2+)-binding residues include Asp42 and Gly69. Asp42 serves as a coordination point for substrate. IMP is bound by residues 42-45 (DEGK) and 67-70 (NAGH). The active-site Proton donor is His70. The residue at position 130 (Ser130) is a Phosphoserine. Residues Thr162, Arg176, Asn255, Thr270, and Arg334 each coordinate IMP. 330–336 (VTTGRKR) provides a ligand contact to substrate. GTP contacts are provided by residues Arg336, 362 to 364 (KLD), and 444 to 447 (GVGK).

The protein belongs to the adenylosuccinate synthetase family. In terms of assembly, homodimer. Requires Mg(2+) as cofactor.

Its subcellular location is the cytoplasm. It catalyses the reaction IMP + L-aspartate + GTP = N(6)-(1,2-dicarboxyethyl)-AMP + GDP + phosphate + 2 H(+). The protein operates within purine metabolism; AMP biosynthesis via de novo pathway; AMP from IMP: step 1/2. In terms of biological role, component of the purine nucleotide cycle (PNC), which interconverts IMP and AMP to regulate the nucleotide levels in various tissues, and which contributes to glycolysis and ammoniagenesis. Catalyzes the first committed step in the biosynthesis of AMP from IMP. The chain is Adenylosuccinate synthetase isozyme 1 (adss1) from Danio rerio (Zebrafish).